A 953-amino-acid chain; its full sequence is Anion exchange protein 4 (953 aa).

The segment at 20–41 is disordered; the sequence is SEQLDGDLGPGSGLDGPSDIDN. The next 4 membrane-spanning stretches (helical) occupy residues 385 to 405, 413 to 433, 470 to 490, and 501 to 521; these read AVLYIYLATVTNAITFGGLLG, GVLESFLGTAVAGATFCLMAG, VGIWVATFCLALVATEASLLV, and FCALISLIFIYDAVGKMLNLI. The membrane (anion exchange) stretch occupies residues 385–953; the sequence is AVLYIYLATV…KAPEINISVN (569 aa). Residues N546 and N570 are each glycosylated (N-linked (GlcNAc...) asparagine). 7 consecutive transmembrane segments (helical) span residues 594 to 614, 635 to 655, 682 to 702, 728 to 748, 785 to 805, 807 to 827, and 869 to 889; these read VPDIAFFSLLLFFTSFLCAIA, FSSVLAILLGCGLDAFLGLAT, PWWLSVAAALPALLLSILIFM, LFCVAVLMLFTSALGLPWYVS, GLVVFILTGVSIFLAPVLKFI, MPVLYGIFLYMGVAALSSMQF, and LWVIKSTPAAIVFPLMLLGLV. The span at 916-927 shows a compositional bias: basic and acidic residues; that stretch reads KTIPENRPEPEH. Positions 916-938 are disordered; it reads KTIPENRPEPEHLFSGNDSENSE. N-linked (GlcNAc...) asparagine glycosylation is found at N932 and N949.

It belongs to the anion exchanger (TC 2.A.31) family. In terms of tissue distribution, expressed in kidney and gastrointestinal tract. In kidney, it is highly expressed in the cortex, expressed at intermediate level in the outer medulla and not expressed in the inner medulla. It is expressed in the cecum, while it is absent in other segments of gastrointestinal tract. Highly expressed in the cortical collecting duct (CCD). Expressed in both alpha-intercalated cells and beta-intercalated cells in the CCD (at protein level).

Its subcellular location is the basolateral cell membrane. The catalysed reaction is 2 hydrogencarbonate(out) + chloride(in) + Na(+)(out) = 2 hydrogencarbonate(in) + chloride(out) + Na(+)(in). It carries out the reaction K(+)(in) + 2 hydrogencarbonate(in) + chloride(out) = K(+)(out) + 2 hydrogencarbonate(out) + chloride(in). It catalyses the reaction Li(+)(in) + 2 hydrogencarbonate(in) + chloride(out) = Li(+)(out) + 2 hydrogencarbonate(out) + chloride(in). The enzyme catalyses Rb(+)(in) + 2 hydrogencarbonate(in) + chloride(out) = Rb(+)(out) + 2 hydrogencarbonate(out) + chloride(in). The catalysed reaction is Cs(+)(in) + 2 hydrogencarbonate(in) + chloride(out) = Cs(+)(out) + 2 hydrogencarbonate(out) + chloride(in). With respect to regulation, 4,4'-diisothiocyanatodihydrostilbene-2,2'- disulfonic acid (H2DIDS) potently inhibits chloride/hydrogencarbonate antiporter activity with 50% inhibition at about 5 uM. Completely inhibits chloride/hydrogencarbonate antiporter activity at 200 uM of 4,4'-diisothiocyano-trans-stilbene-2,2'-disulfonic acid (DIDS). Functionally, electroneutral Cl(-)/HCO3(-) antiporter that favors chloride ion entry and efflux of hydrogencarbonate and sodium ion across the basolateral membrane and may participate in salivary secretion. Also mediates Cl(-)/HCO3(-) exchange activity in the presence of K(+) as well as Cs(+), Li(+), and Rb(+). Does not contribute to Cl(-)/HCO3(-) exchanger in the apical membrane of the upper villous epithelium. The polypeptide is Anion exchange protein 4 (Rattus norvegicus (Rat)).